We begin with the raw amino-acid sequence, 257 residues long: S-methyl-5'-thioadenosine phosphorylase (257 aa).

Phosphate contacts are provided by residues Ser10 and 50–51; that span reads RH. Residue Met180 coordinates substrate. Residue Thr181 coordinates phosphate. A substrate-binding site is contributed by 204–206; it reads DYD.

It belongs to the PNP/MTAP phosphorylase family. MTAP subfamily. In terms of assembly, homohexamer. Dimer of a homotrimer.

It carries out the reaction S-methyl-5'-thioadenosine + phosphate = 5-(methylsulfanyl)-alpha-D-ribose 1-phosphate + adenine. Its pathway is amino-acid biosynthesis; L-methionine biosynthesis via salvage pathway; S-methyl-5-thio-alpha-D-ribose 1-phosphate from S-methyl-5'-thioadenosine (phosphorylase route): step 1/1. In terms of biological role, catalyzes the reversible phosphorylation of S-methyl-5'-thioadenosine (MTA) to adenine and 5-methylthioribose-1-phosphate. Involved in the breakdown of MTA, a major by-product of polyamine biosynthesis. Responsible for the first step in the methionine salvage pathway after MTA has been generated from S-adenosylmethionine. Has broad substrate specificity with 6-aminopurine nucleosides as preferred substrates. The sequence is that of S-methyl-5'-thioadenosine phosphorylase from Pyrococcus horikoshii (strain ATCC 700860 / DSM 12428 / JCM 9974 / NBRC 100139 / OT-3).